A 325-amino-acid chain; its full sequence is Elongation factor P--(R)-beta-lysine ligase (325 aa).

76–78 contributes to the substrate binding site; sequence SPE. Residues 100 to 102 and N109 contribute to the ATP site; that span reads RNE. Y118 is a substrate binding site. 244 to 245 is an ATP binding site; it reads EL. E251 is a binding site for substrate. G300 is an ATP binding site.

The protein belongs to the class-II aminoacyl-tRNA synthetase family. EpmA subfamily. As to quaternary structure, homodimer.

It catalyses the reaction D-beta-lysine + L-lysyl-[protein] + ATP = N(6)-((3R)-3,6-diaminohexanoyl)-L-lysyl-[protein] + AMP + diphosphate + H(+). Its function is as follows. With EpmB is involved in the beta-lysylation step of the post-translational modification of translation elongation factor P (EF-P). Catalyzes the ATP-dependent activation of (R)-beta-lysine produced by EpmB, forming a lysyl-adenylate, from which the beta-lysyl moiety is then transferred to the epsilon-amino group of a conserved specific lysine residue in EF-P. In Klebsiella pneumoniae (strain 342), this protein is Elongation factor P--(R)-beta-lysine ligase.